The sequence spans 331 residues: Biotin synthase (331 aa).

Residues 52–281 (FFQNKVKLNM…TKEIRVSGGR (230 aa)) enclose the Radical SAM core domain. [4Fe-4S] cluster-binding residues include Cys70, Cys74, and Cys77. Positions 114, 146, 206, and 276 each coordinate [2Fe-2S] cluster.

The protein belongs to the radical SAM superfamily. Biotin synthase family. Homodimer. Requires [4Fe-4S] cluster as cofactor. [2Fe-2S] cluster is required as a cofactor.

The catalysed reaction is (4R,5S)-dethiobiotin + (sulfur carrier)-SH + 2 reduced [2Fe-2S]-[ferredoxin] + 2 S-adenosyl-L-methionine = (sulfur carrier)-H + biotin + 2 5'-deoxyadenosine + 2 L-methionine + 2 oxidized [2Fe-2S]-[ferredoxin]. Its pathway is cofactor biosynthesis; biotin biosynthesis; biotin from 7,8-diaminononanoate: step 2/2. Its function is as follows. Catalyzes the conversion of dethiobiotin (DTB) to biotin by the insertion of a sulfur atom into dethiobiotin via a radical-based mechanism. The protein is Biotin synthase of Bacillus pumilus (strain SAFR-032).